The chain runs to 273 residues: Large ribosomal subunit protein uL2 (273 aa).

The interval 228 to 273 is disordered; the sequence is VDHPHGGGEGKTSGGRHPVTPWGFPTKGKKTRKNKRTSKFIVKKRK. Positions 254–273 are enriched in basic residues; sequence KGKKTRKNKRTSKFIVKKRK.

Belongs to the universal ribosomal protein uL2 family. Part of the 50S ribosomal subunit. Forms a bridge to the 30S subunit in the 70S ribosome.

Its function is as follows. One of the primary rRNA binding proteins. Required for association of the 30S and 50S subunits to form the 70S ribosome, for tRNA binding and peptide bond formation. It has been suggested to have peptidyltransferase activity; this is somewhat controversial. Makes several contacts with the 16S rRNA in the 70S ribosome. In Rickettsia rickettsii (strain Iowa), this protein is Large ribosomal subunit protein uL2.